The primary structure comprises 355 residues: MKIRIDIPHHPYDIQIEKGCMAQAGQWLRELWQPQKVVIVTDNHVASLYAEKVKLSLEDAGFQVAVFDFLEGEERKNLTTVQKVYEFLVKQGLTRSDGIVALGGGVVGDLAGFVASTYMRGIHFVQIPTSLTAQVDSSIGGKTGVNTPFAKNMVGTFAQPDGVLIDPLVLETLGKRELIEGMGEVIKYGLIEDPELWALLTELNGSVESILEHAETLIEHSCQVKRKMVVEDELDNGIRLYLNFGHTIGHAIEATAGYGKVMHGEAVAMGMVQISKVAEEKGLMPAGITQSITEMCQKFGLPVDYENWEVDKLYQALTHDKKTRGNTLKLVLVSELGSAIIHPVSLEEMKDYLVK.

Residues 71 to 76 (EGEERK), 105 to 109 (GVVGD), 129 to 130 (TS), Lys-142, and Lys-151 each bind NAD(+). 3 residues coordinate Zn(2+): Glu-184, His-246, and His-263.

It belongs to the sugar phosphate cyclases superfamily. Dehydroquinate synthase family. Co(2+) serves as cofactor. It depends on Zn(2+) as a cofactor. Requires NAD(+) as cofactor.

It is found in the cytoplasm. It catalyses the reaction 7-phospho-2-dehydro-3-deoxy-D-arabino-heptonate = 3-dehydroquinate + phosphate. Its pathway is metabolic intermediate biosynthesis; chorismate biosynthesis; chorismate from D-erythrose 4-phosphate and phosphoenolpyruvate: step 2/7. In terms of biological role, catalyzes the conversion of 3-deoxy-D-arabino-heptulosonate 7-phosphate (DAHP) to dehydroquinate (DHQ). The sequence is that of 3-dehydroquinate synthase from Streptococcus pneumoniae (strain JJA).